A 66-amino-acid polypeptide reads, in one-letter code: Delta-buthitoxin-Hj1a (66 aa).

The region spanning 4 to 66 (RDAYIAQPHN…EPIKVPGKCH (63 aa)) is the LCN-type CS-alpha/beta domain. Disulfide bonds link Cys14-Cys65, Cys18-Cys38, Cys24-Cys48, and Cys28-Cys50.

Belongs to the long (4 C-C) scorpion toxin superfamily. Sodium channel inhibitor family. Alpha subfamily. Expressed by the venom gland.

Its subcellular location is the secreted. Its function is as follows. This recombinant toxin slows fast inactivation on Nav1.1/SCN1A (EC(50)=17 nM), Nav1.4/SN4A (EC(50)=7.5 nM), Nav1.5/SCN5A (EC(50)=9.2 nM) and Nav1.6/SCN8A (EC(50)=37.3 nM) voltage-gated sodium channels. On Nav1.1/SCN1A channel, it acts as an agonist by inducing a shift in both the voltage dependence of channel inactivation (alpha-toxin activity) and activation (beta-toxin activity). In vivo, shows moderate insecticidal activities. It induces irreversible paralysis in blowflies and lethal effects in D.melanogaster. This is Delta-buthitoxin-Hj1a from Hottentotta judaicus (Black scorpion).